Reading from the N-terminus, the 109-residue chain is Large ribosomal subunit protein uL24 (109 aa).

It belongs to the universal ribosomal protein uL24 family. In terms of assembly, part of the 50S ribosomal subunit.

Its function is as follows. One of two assembly initiator proteins, it binds directly to the 5'-end of the 23S rRNA, where it nucleates assembly of the 50S subunit. In terms of biological role, one of the proteins that surrounds the polypeptide exit tunnel on the outside of the subunit. This is Large ribosomal subunit protein uL24 from Ehrlichia chaffeensis (strain ATCC CRL-10679 / Arkansas).